The sequence spans 350 residues: 3-dehydroquinate synthase (350 aa).

Residues 106–110 (GVVGD), 130–131 (TS), K143, and K152 contribute to the NAD(+) site. Residues E185, H246, and H263 each contribute to the Zn(2+) site.

The protein belongs to the sugar phosphate cyclases superfamily. Dehydroquinate synthase family. It depends on Co(2+) as a cofactor. Zn(2+) serves as cofactor. NAD(+) is required as a cofactor.

The protein localises to the cytoplasm. The enzyme catalyses 7-phospho-2-dehydro-3-deoxy-D-arabino-heptonate = 3-dehydroquinate + phosphate. The protein operates within metabolic intermediate biosynthesis; chorismate biosynthesis; chorismate from D-erythrose 4-phosphate and phosphoenolpyruvate: step 2/7. Catalyzes the conversion of 3-deoxy-D-arabino-heptulosonate 7-phosphate (DAHP) to dehydroquinate (DHQ). This is 3-dehydroquinate synthase from Clostridium perfringens (strain SM101 / Type A).